A 203-amino-acid chain; its full sequence is uncharacterized protein (203 aa).

Disordered stretches follow at residues 65-84 (LSLS…SFDS) and 92-170 (SSSS…ETAL). Composition is skewed to acidic residues over residues 68 to 82 (SEDE…EDSF) and 98 to 110 (SEEE…EESL). Positions 111–122 (DSSFLVSASLSL) are enriched in low complexity. A compositionally biased stretch (acidic residues) spans 123-168 (SEDDEEEDSESEDEDEDEDSDSDSDSDSDSDEDEDEDEDSEEEEET). The chain crosses the membrane as a helical span at residues 182-202 (TSFLLPFTLVVLAILFYPAWV).

It localises to the membrane. This is an uncharacterized protein from Saccharomyces cerevisiae (strain ATCC 204508 / S288c) (Baker's yeast).